Reading from the N-terminus, the 232-residue chain is Small ribosomal subunit protein uS3 (232 aa).

Residues 39 to 107 (VRQFLTSELK…PAQINIAEVR (69 aa)) form the KH type-2 domain. A disordered region spans residues 213 to 232 (AANAVEPKGDKPKKQRKGRK).

It belongs to the universal ribosomal protein uS3 family. In terms of assembly, part of the 30S ribosomal subunit. Forms a tight complex with proteins S10 and S14.

Binds the lower part of the 30S subunit head. Binds mRNA in the 70S ribosome, positioning it for translation. This Vibrio parahaemolyticus serotype O3:K6 (strain RIMD 2210633) protein is Small ribosomal subunit protein uS3.